We begin with the raw amino-acid sequence, 446 residues long: Maturase K (446 aa).

The protein belongs to the intron maturase 2 family. MatK subfamily.

Its subcellular location is the plastid. It localises to the chloroplast. Usually encoded in the trnK tRNA gene intron. Probably assists in splicing its own and other chloroplast group II introns. The chain is Maturase K from Phalaenopsis aphrodite subsp. formosana (Moth orchid).